A 47-amino-acid polypeptide reads, in one-letter code: uncharacterized protein (47 aa).

Residues 2 to 47 (LRVRKRDGRLEEFSRAKIVRTCLRAGASKKIAEKVAEELKRGYTMG) enclose the ATP-cone domain.

This is an uncharacterized protein from Archaeoglobus fulgidus (strain ATCC 49558 / DSM 4304 / JCM 9628 / NBRC 100126 / VC-16).